We begin with the raw amino-acid sequence, 49 residues long: Large ribosomal subunit protein bL33A (49 aa).

Belongs to the bacterial ribosomal protein bL33 family.

The protein is Large ribosomal subunit protein bL33A of Staphylococcus haemolyticus (strain JCSC1435).